The following is a 201-amino-acid chain: Small ribosomal subunit protein uS4 (201 aa).

Positions 91-155 (SRLDNVVYRA…STLPFQVARE (65 aa)) constitute an S4 RNA-binding domain.

Belongs to the universal ribosomal protein uS4 family. In terms of assembly, part of the 30S ribosomal subunit. Contacts protein S5. The interaction surface between S4 and S5 is involved in control of translational fidelity.

In terms of biological role, one of the primary rRNA binding proteins, it binds directly to 16S rRNA where it nucleates assembly of the body of the 30S subunit. With S5 and S12 plays an important role in translational accuracy. This chain is Small ribosomal subunit protein uS4, found in Rhodococcus jostii (strain RHA1).